The primary structure comprises 447 residues: MSRKYFGTDGIRGRVGESPITPDFVLRLGYAAGRVLAHGGEAHGHGRPTVLIGKDTRLSGYMLEAALEAGFTAAGVDVLMSGPLPTPGVAYLTRALRLSAGVVISASHNPYYDNGIKFFSATGDKLPDETELQIEAELEKPMAYAASDALGRARRIEDAAGRYIEFCKSTFPSDLNLFGMKVVLDSAHGAAYHIAPHVFHELGADVVSIGNQPNGRNINDGYGATAPGKLVEATREHGADIGLAFDGDADRLQVVDRNGRLYNGDELLYVMVQARRAAGQTVPGAVGTLMTNLAVELALKAQGVEFVRAKVGDRYVLEELKKNGWLLGGEGSGHLLCLDKHSTGDGIISALQVLAALRRSGQTLDEMLDGVRLFPQKLINVRVEKGFDWKSHAGLQAALKTSEAELDGKGRVLIRPSGTEPVVRVMVEAQDAELANQHAERLAATLQ.

The active-site Phosphoserine intermediate is the Ser-107. Mg(2+) is bound by residues Ser-107, Asp-246, Asp-248, and Asp-250. Ser-107 carries the phosphoserine modification.

Belongs to the phosphohexose mutase family. Mg(2+) serves as cofactor. Activated by phosphorylation.

It carries out the reaction alpha-D-glucosamine 1-phosphate = D-glucosamine 6-phosphate. Catalyzes the conversion of glucosamine-6-phosphate to glucosamine-1-phosphate. This Ralstonia pickettii (strain 12J) protein is Phosphoglucosamine mutase.